Consider the following 254-residue polypeptide: Proteasome activator complex subunit 3 (254 aa).

Ala-2 carries the post-translational modification N-acetylalanine. Phosphoserine occurs at positions 17 and 24. Residue Lys-195 is modified to N6-acetyllysine; by P300/CBP. Ser-247 bears the Phosphoserine; by CHEK2 mark.

It belongs to the PA28 family. As to quaternary structure, homoheptamer; the stability of the heptamer is essential for the specific activation of the trypsine-like subunit and inhibition of the chymotrypsin-like and postglutamyl-preferring (PGPH) subunits of the proteasome. Interacts with p53/TP53, MDM2 and MAP3K3. Associates with the proteasome. Interacts with CCAR2. Interacts with PSME3IP1 (via C-terminus); the interaction is direct and promotes the association of PSME3 with the 20S proteasome. Interacts with COIL; the interaction is inhibited by PSME3IP1. Phosphorylated by MAP3K3. Phosphorylation at Ser-247 promotes its association with CCAR2. In terms of processing, acetylation at the major site Lys-195 is important for oligomerization and ability to degrade its target substrates. Deacetylated by SIRT1.

It localises to the nucleus. Its subcellular location is the cytoplasm. In terms of biological role, subunit of the 11S REG-gamma (also called PA28-gamma) proteasome regulator, a doughnut-shaped homoheptamer which associates with the proteasome. 11S REG-gamma activates the trypsin-like catalytic subunit of the proteasome but inhibits the chymotrypsin-like and postglutamyl-preferring (PGPH) subunits. Facilitates the MDM2-p53/TP53 interaction which promotes ubiquitination- and MDM2-dependent proteasomal degradation of p53/TP53, limiting its accumulation and resulting in inhibited apoptosis after DNA damage. May also be involved in cell cycle regulation. Mediates CCAR2 and CHEK2-dependent SIRT1 inhibition. This chain is Proteasome activator complex subunit 3 (PSME3), found in Pongo abelii (Sumatran orangutan).